The chain runs to 115 residues: Large ribosomal subunit protein uL18 (115 aa).

The protein belongs to the universal ribosomal protein uL18 family. Part of the 50S ribosomal subunit; part of the 5S rRNA/L5/L18/L25 subcomplex. Contacts the 5S and 23S rRNAs.

In terms of biological role, this is one of the proteins that bind and probably mediate the attachment of the 5S RNA into the large ribosomal subunit, where it forms part of the central protuberance. The polypeptide is Large ribosomal subunit protein uL18 (Ruthia magnifica subsp. Calyptogena magnifica).